A 297-amino-acid polypeptide reads, in one-letter code: Tyrosine recombinase XerC (297 aa).

The Core-binding (CB) domain maps to 1–83 (MAILDEFDEH…AVKAFTAWAK (83 aa)). In terms of domain architecture, Tyr recombinase spans 104 to 291 (TLPAVLRQDQ…AVSRLRVVHD (188 aa)). Catalysis depends on residues R148, K172, H243, R246, and H269. Residue Y278 is the O-(3'-phospho-DNA)-tyrosine intermediate of the active site.

It belongs to the 'phage' integrase family. XerC subfamily. Forms a cyclic heterotetrameric complex composed of two molecules of XerC and two molecules of XerD.

The protein localises to the cytoplasm. In terms of biological role, site-specific tyrosine recombinase, which acts by catalyzing the cutting and rejoining of the recombining DNA molecules. The XerC-XerD complex is essential to convert dimers of the bacterial chromosome into monomers to permit their segregation at cell division. It also contributes to the segregational stability of plasmids. In Mycobacterium leprae (strain TN), this protein is Tyrosine recombinase XerC.